The following is a 718-amino-acid chain: Myeloperoxidase (718 aa).

The signal sequence occupies residues 1–15 (MKLLLALAGLLAPLA). The propeptide occupies 16–138 (MLQTSNGATP…SSGCAYQDVR (123 aa)). Residue Asn113 is glycosylated (N-linked (GlcNAc...) asparagine). Residues Cys141 and Cys154 are joined by a disulfide bond. Asp234 lines the heme b pocket. His235 (proton acceptor) is an active-site residue. Residue Asp236 participates in Ca(2+) binding. Cystine bridges form between Cys255–Cys265 and Cys259–Cys283. Cys290 carries the cysteine sulfenic acid (-SOH) modification. The N-linked (GlcNAc...) asparagine glycan is linked to Asn297. Ca(2+) contacts are provided by Thr308, Phe310, Asp312, and Ser314. 2 N-linked (GlcNAc...) asparagine glycosylation sites follow: Asn329 and Asn365. Cys361 and Cys372 are disulfide-bonded. Heme b contacts are provided by Glu382 and Met383. The N-linked (GlcNAc...) asparagine glycan is linked to Asn457. His476 provides a ligand contact to heme b. 2 disulfides stabilise this stretch: Cys580/Cys637 and Cys678/Cys704. An N-linked (GlcNAc...) asparagine glycan is attached at Asn711.

The protein belongs to the peroxidase family. XPO subfamily. As to quaternary structure, homodimer; disulfide-linked. Each monomer consists of a light and a heavy chain. Found in a complex with CP and LTF; interacts directly with CP, which protects CP antioxidant properties by MPO. It depends on Ca(2+) as a cofactor. Requires heme b as cofactor.

The protein localises to the lysosome. It catalyses the reaction chloride + H2O2 + H(+) = hypochlorous acid + H2O. Functionally, part of the host defense system of polymorphonuclear leukocytes. It is responsible for microbicidal activity against a wide range of organisms. In the stimulated PMN, MPO catalyzes the production of hypohalous acids, primarily hypochlorous acid in physiologic situations, and other toxic intermediates that greatly enhance PMN microbicidal activity. Mediates the proteolytic cleavage of alpha-1-microglobulin to form t-alpha-1-microglobulin, which potently inhibits oxidation of low density lipoprotein particles and limits vascular damage. The sequence is that of Myeloperoxidase (Mpo) from Mus musculus (Mouse).